We begin with the raw amino-acid sequence, 407 residues long: Imidazolonepropionase (407 aa).

The Fe(3+) site is built by H68 and H70. Residues H68 and H70 each coordinate Zn(2+). 4-imidazolone-5-propanoate-binding residues include R77, Y140, and H173. Y140 contacts N-formimidoyl-L-glutamate. H238 is a binding site for Fe(3+). Residue H238 participates in Zn(2+) binding. Q241 contacts 4-imidazolone-5-propanoate. Residue D313 coordinates Fe(3+). D313 contacts Zn(2+). Positions 315 and 317 each coordinate N-formimidoyl-L-glutamate. Residue T318 coordinates 4-imidazolone-5-propanoate.

This sequence belongs to the metallo-dependent hydrolases superfamily. HutI family. It depends on Zn(2+) as a cofactor. The cofactor is Fe(3+).

It localises to the cytoplasm. The catalysed reaction is 4-imidazolone-5-propanoate + H2O = N-formimidoyl-L-glutamate. The protein operates within amino-acid degradation; L-histidine degradation into L-glutamate; N-formimidoyl-L-glutamate from L-histidine: step 3/3. Catalyzes the hydrolytic cleavage of the carbon-nitrogen bond in imidazolone-5-propanoate to yield N-formimidoyl-L-glutamate. It is the third step in the universal histidine degradation pathway. The chain is Imidazolonepropionase from Burkholderia multivorans (strain ATCC 17616 / 249).